The sequence spans 790 residues: Phenylalanine--tRNA ligase beta subunit (790 aa).

A tRNA-binding domain is found at 39–147; sequence AKPFSGIVVG…ADAPVGVDVR (109 aa). In terms of domain architecture, B5 spans 400 to 476; that stretch reads PAKALVNLRH…RLYGYNKLPV (77 aa). Residues D454, D460, E463, and E464 each coordinate Mg(2+). In terms of domain architecture, FDX-ACB spans 696-789; sequence SRFPEIRRDL…LGNRFGASLR (94 aa).

It belongs to the phenylalanyl-tRNA synthetase beta subunit family. Type 1 subfamily. Tetramer of two alpha and two beta subunits. The cofactor is Mg(2+).

It localises to the cytoplasm. It catalyses the reaction tRNA(Phe) + L-phenylalanine + ATP = L-phenylalanyl-tRNA(Phe) + AMP + diphosphate + H(+). In Hahella chejuensis (strain KCTC 2396), this protein is Phenylalanine--tRNA ligase beta subunit.